The primary structure comprises 396 residues: 1-deoxy-D-xylulose 5-phosphate reductoisomerase (396 aa).

NADPH is bound by residues Thr15, Gly16, Ser17, Ile18, Gly41, and Asn129. Residue Lys130 coordinates 1-deoxy-D-xylulose 5-phosphate. An NADPH-binding site is contributed by Glu131. Asp155 contacts Mn(2+). Ser156, Glu157, Ser182, and His205 together coordinate 1-deoxy-D-xylulose 5-phosphate. Glu157 serves as a coordination point for Mn(2+). Residue Gly211 participates in NADPH binding. Residues Ser218, Asn223, Lys224, and Glu227 each coordinate 1-deoxy-D-xylulose 5-phosphate. Position 227 (Glu227) interacts with Mn(2+).

The protein belongs to the DXR family. Mg(2+) is required as a cofactor. Mn(2+) serves as cofactor.

It catalyses the reaction 2-C-methyl-D-erythritol 4-phosphate + NADP(+) = 1-deoxy-D-xylulose 5-phosphate + NADPH + H(+). It functions in the pathway isoprenoid biosynthesis; isopentenyl diphosphate biosynthesis via DXP pathway; isopentenyl diphosphate from 1-deoxy-D-xylulose 5-phosphate: step 1/6. Its function is as follows. Catalyzes the NADPH-dependent rearrangement and reduction of 1-deoxy-D-xylulose-5-phosphate (DXP) to 2-C-methyl-D-erythritol 4-phosphate (MEP). The sequence is that of 1-deoxy-D-xylulose 5-phosphate reductoisomerase from Xanthomonas axonopodis pv. citri (strain 306).